A 775-amino-acid chain; its full sequence is Chloride channel protein CLC-a (775 aa).

The interval 1-28 (MDEDGNLQISNSNYNGEEEGEDPENNTL) is disordered. 12 helical membrane-spanning segments follow: residues 88-108 (TLAC…NLAV), 131-151 (GLMV…VLVV), 178-198 (FGFT…AAGL), 206-226 (LVHI…DNHR), 248-268 (GSAS…LFAL), 278-298 (ALLW…RAFI), 328-348 (AADI…GSLY), 371-391 (VLLS…LPFL), 453-473 (MVSL…TFGI), 478-498 (GLFL…GTAM), 510-530 (AVLG…SLCV), and 531-551 (IFLE…VLLI). CBS domains follow at residues 595-658 (AKPP…FLNE) and 703-768 (TNTT…HLDK). Residues 730–750 (HLLVVPKIQASGMSPVIGILT) traverse the membrane as a helical segment.

This sequence belongs to the chloride channel (TC 2.A.49) family. As to quaternary structure, homodimer. Interacts with PP2A5. Broadly expressed in the plant.

It localises to the membrane. Functionally, voltage-gated chloride channel that could play a role in the regulation of nitrate content. The sequence is that of Chloride channel protein CLC-a (CLC-A) from Arabidopsis thaliana (Mouse-ear cress).